The chain runs to 290 residues: Ribonuclease HIII (290 aa).

The region spanning 78–290 is the RNase H type-2 domain; the sequence is LPLIGTDEVG…FKNTEKAKNA (213 aa). Positions 84, 85, and 187 each coordinate a divalent metal cation.

It belongs to the RNase HII family. RnhC subfamily. It depends on Mn(2+) as a cofactor. Mg(2+) serves as cofactor.

The protein resides in the cytoplasm. The enzyme catalyses Endonucleolytic cleavage to 5'-phosphomonoester.. Its function is as follows. Endonuclease that specifically degrades the RNA of RNA-DNA hybrids. This Streptococcus pneumoniae (strain CGSP14) protein is Ribonuclease HIII.